The following is a 315-amino-acid chain: Aspartate carbamoyltransferase catalytic subunit (315 aa).

Residues Arg65 and Thr66 each contribute to the carbamoyl phosphate site. Lys93 provides a ligand contact to L-aspartate. Arg115, His145, and Gln148 together coordinate carbamoyl phosphate. L-aspartate-binding residues include Arg179 and Arg234. Gly275 and Pro276 together coordinate carbamoyl phosphate.

The protein belongs to the aspartate/ornithine carbamoyltransferase superfamily. ATCase family. As to quaternary structure, heterododecamer (2C3:3R2) of six catalytic PyrB chains organized as two trimers (C3), and six regulatory PyrI chains organized as three dimers (R2).

The enzyme catalyses carbamoyl phosphate + L-aspartate = N-carbamoyl-L-aspartate + phosphate + H(+). The protein operates within pyrimidine metabolism; UMP biosynthesis via de novo pathway; (S)-dihydroorotate from bicarbonate: step 2/3. Catalyzes the condensation of carbamoyl phosphate and aspartate to form carbamoyl aspartate and inorganic phosphate, the committed step in the de novo pyrimidine nucleotide biosynthesis pathway. In Xanthomonas euvesicatoria pv. vesicatoria (strain 85-10) (Xanthomonas campestris pv. vesicatoria), this protein is Aspartate carbamoyltransferase catalytic subunit.